A 203-amino-acid chain; its full sequence is Pyrrolidone-carboxylate peptidase 1 (203 aa).

Residues Glu-78, Cys-141, and His-165 contribute to the active site.

The protein belongs to the peptidase C15 family. In terms of assembly, homotetramer.

It localises to the cytoplasm. The catalysed reaction is Release of an N-terminal pyroglutamyl group from a polypeptide, the second amino acid generally not being Pro.. Removes 5-oxoproline from various penultimate amino acid residues except L-proline. In Caldanaerobacter subterraneus subsp. tengcongensis (strain DSM 15242 / JCM 11007 / NBRC 100824 / MB4) (Thermoanaerobacter tengcongensis), this protein is Pyrrolidone-carboxylate peptidase 1.